Here is a 390-residue protein sequence, read N- to C-terminus: Altered inheritance of mitochondria protein 6 (390 aa).

Positions 1–17 are cleaved as a signal peptide; sequence MLGLKGCLTILIGYVIA.

Belongs to the AIM6 family.

The polypeptide is Altered inheritance of mitochondria protein 6 (Saccharomyces cerevisiae (strain ATCC 204508 / S288c) (Baker's yeast)).